Reading from the N-terminus, the 520-residue chain is GMP synthase [glutamine-hydrolyzing] (520 aa).

In terms of domain architecture, Glutamine amidotransferase type-1 spans 9–202; that stretch reads SVLIVDFGSQ…IHNIAGIKGD (194 aa). Cys-86 functions as the Nucleophile in the catalytic mechanism. Residues His-176 and Glu-178 contribute to the active site. In terms of domain architecture, GMPS ATP-PPase spans 203–395; sequence WSMSAYRQKA…LGLPDSFIGR (193 aa). 230–236 provides a ligand contact to ATP; the sequence is SGGVDSS.

Homodimer.

The catalysed reaction is XMP + L-glutamine + ATP + H2O = GMP + L-glutamate + AMP + diphosphate + 2 H(+). It participates in purine metabolism; GMP biosynthesis; GMP from XMP (L-Gln route): step 1/1. Catalyzes the synthesis of GMP from XMP. The protein is GMP synthase [glutamine-hydrolyzing] of Rhizobium etli (strain CIAT 652).